The sequence spans 433 residues: 23S rRNA (uracil(1939)-C(5))-methyltransferase RlmD (433 aa).

Residues 1–53 (MPTAVIESLDHEGRGIARVEGKAVFIEGGLPGETVEYRVLRSKPNYEQAEATR) form the TRAM domain. [4Fe-4S] cluster contacts are provided by C66, C72, C75, and C154. S-adenosyl-L-methionine-binding residues include Q263, F292, N297, E313, N341, and D362. C389 (nucleophile) is an active-site residue.

Belongs to the class I-like SAM-binding methyltransferase superfamily. RNA M5U methyltransferase family. RlmD subfamily.

It catalyses the reaction uridine(1939) in 23S rRNA + S-adenosyl-L-methionine = 5-methyluridine(1939) in 23S rRNA + S-adenosyl-L-homocysteine + H(+). Catalyzes the formation of 5-methyl-uridine at position 1939 (m5U1939) in 23S rRNA. In Azoarcus sp. (strain BH72), this protein is 23S rRNA (uracil(1939)-C(5))-methyltransferase RlmD.